We begin with the raw amino-acid sequence, 560 residues long: Arginine--tRNA ligase (560 aa).

The short motif at Ala-122–His-132 is the 'HIGH' region element.

This sequence belongs to the class-I aminoacyl-tRNA synthetase family.

It is found in the cytoplasm. The enzyme catalyses tRNA(Arg) + L-arginine + ATP = L-arginyl-tRNA(Arg) + AMP + diphosphate. The chain is Arginine--tRNA ligase from Methanosphaera stadtmanae (strain ATCC 43021 / DSM 3091 / JCM 11832 / MCB-3).